The primary structure comprises 354 residues: MKSIISLTAAAAIGVAMFVAPAFAADKGTVGIAMPTKASARWIDDGNNIVKQLQAAGYGTDLQYGDDDIPNQLSQVENMVTKGDKVLVIAAIDGTTLSDVLQKAHDAGIKVIAYDRLIRNSGNVDYYATFDNFKVGVLQANSIVDGLGLKDGKGPFNIELFGGSPDDNNAFFFYDGAMSVLKPYIDSGKLVVKSGQQGMDKVGTLRWDPATAQARMDNLLSAYYTDAHVDAVLSPYDGLSIGILSSLKGVGYGTGGQKLPIVTGQDSEIPSVKSIIAGEQHSTIFKDTRDLAKVTVDMVNALMEGKTPEVTDTKTYDNGVKVVPSYLLTPVAVDKTNYEKVLVEGGYYKADQLK.

A signal peptide spans 1–25; sequence MKSIISLTAAAAIGVAMFVAPAFAA.

It belongs to the bacterial solute-binding protein 2 family.

It is found in the periplasm. Functionally, required for effective transcriptional induction of the vir genes by monosaccharides in response to plant signals and for normal growth and chemotaxis towards certain sugars. Functions as a periplasmic multiple sugar-binding receptor protein. It does not interact with a transport system. The chain is Multiple sugar-binding periplasmic receptor ChvE (chvE) from Rhizobium radiobacter (Agrobacterium tumefaciens).